The following is a 315-amino-acid chain: MGFIMEFKHKSVLLEETIDNLNIKPDGIYVDGTLGGAGHSYQIAKRLTGGGRLIGIDQDADAIAAATERLKEFEERVTIVRNNYCNMDKVLDELGIDKVDGILLDIGVSSYQLDTASRGFTYNVDTALDMRMDQRQEMTAKDLVNTYSEMELFRIIRDYGEDRFAKNIAKHIVAARKEKPIETTFELNEIIKASIPAKVRATGGHPSKRTYQAIRIELNRELDVLENSIDMMIDRLNPQGRLCIITFHSLEDRIVKARFRNNENPCTCPPDFPVCVCGKKSKGKVITRKPIVPGDEELNENQRSKSSKLRVFERI.

S-adenosyl-L-methionine-binding positions include 37-39 (AGH), D57, Y84, D105, and Q112.

Belongs to the methyltransferase superfamily. RsmH family.

It is found in the cytoplasm. The enzyme catalyses cytidine(1402) in 16S rRNA + S-adenosyl-L-methionine = N(4)-methylcytidine(1402) in 16S rRNA + S-adenosyl-L-homocysteine + H(+). Its function is as follows. Specifically methylates the N4 position of cytidine in position 1402 (C1402) of 16S rRNA. This chain is Ribosomal RNA small subunit methyltransferase H, found in Lachnospira eligens (strain ATCC 27750 / DSM 3376 / VPI C15-48 / C15-B4) (Eubacterium eligens).